Here is a 552-residue protein sequence, read N- to C-terminus: ATP synthase subunit alpha (552 aa).

Residue 173-180 (GDRQTGKS) participates in ATP binding. A disordered region spans residues 509–552 (KPQFSGGSKGSNVPKDVDAGATDADDISQEKITTRKGGATAARG).

Belongs to the ATPase alpha/beta chains family. F-type ATPases have 2 components, CF(1) - the catalytic core - and CF(0) - the membrane proton channel. CF(1) has five subunits: alpha(3), beta(3), gamma(1), delta(1), epsilon(1). CF(0) has three main subunits: a(1), b(2) and c(9-12). The alpha and beta chains form an alternating ring which encloses part of the gamma chain. CF(1) is attached to CF(0) by a central stalk formed by the gamma and epsilon chains, while a peripheral stalk is formed by the delta and b chains.

The protein localises to the cell membrane. The catalysed reaction is ATP + H2O + 4 H(+)(in) = ADP + phosphate + 5 H(+)(out). Produces ATP from ADP in the presence of a proton gradient across the membrane. The alpha chain is a regulatory subunit. The polypeptide is ATP synthase subunit alpha (Kineococcus radiotolerans (strain ATCC BAA-149 / DSM 14245 / SRS30216)).